Here is a 154-residue protein sequence, read N- to C-terminus: Lipoprotein signal peptidase (154 aa).

Helical transmembrane passes span 55 to 75 and 84 to 104; these read GHMW…IYIM and LFSI…IDRV. Active-site residues include D111 and D129. Residues 124–144 traverse the membrane as a helical segment; that stretch reads IFNVADAALSVGVVLMLVYVF.

This sequence belongs to the peptidase A8 family.

Its subcellular location is the cell membrane. It carries out the reaction Release of signal peptides from bacterial membrane prolipoproteins. Hydrolyzes -Xaa-Yaa-Zaa-|-(S,diacylglyceryl)Cys-, in which Xaa is hydrophobic (preferably Leu), and Yaa (Ala or Ser) and Zaa (Gly or Ala) have small, neutral side chains.. Its pathway is protein modification; lipoprotein biosynthesis (signal peptide cleavage). This protein specifically catalyzes the removal of signal peptides from prolipoproteins. The sequence is that of Lipoprotein signal peptidase from Listeria monocytogenes serotype 4b (strain CLIP80459).